A 206-amino-acid polypeptide reads, in one-letter code: High-affinity nitrate transporter-activating protein 2.1 (206 aa).

An N-terminal signal peptide occupies residues 1–27 (MARLAGVAALSLVLVLLGAGVPRPAAA). The helical transmembrane segment at 180-200 (VAAGVFSTFSIAALAFFFVVE) threads the bilayer.

Belongs to the NAR2 family. In terms of assembly, heterotetramer composed of two NRT2.1, NRT2.2 or NRT2.3 and two NAR2.1. Interacts with NRT2.1, NRT2.2 and isoform 1 of NRT2.3. As to expression, expressed in epidermal cells of primary and lateral roots, root-shoot junction zone, vascular tissues of adventitious root primordia, stems and coleoptiles of germinating seeds.

The protein localises to the cell membrane. Its function is as follows. Acts as a dual component transporter with NTR2.1, NRT2.2 and NRT2.3. Required for high-affinity nitrate transport. Involved in the regulation of NRT2.1, NRT2.2 and NRT2.3 expression, and in both, HATS (high-affinity transport system) and LATS (low-affinity transport system) activities in plant roots. Imports nitrate with high affinity when expressed with NTR2.1, NTR2.2 or NTR2.3 in a heterologous system (Xenopus oocytes). The chain is High-affinity nitrate transporter-activating protein 2.1 (NAR2.1) from Oryza sativa subsp. japonica (Rice).